A 239-amino-acid polypeptide reads, in one-letter code: 7-cyano-7-deazaguanine synthase (239 aa).

7–17 (LSGGIDSSTLL) provides a ligand contact to ATP. Residues Cys184, Cys192, Cys195, and Cys198 each coordinate Zn(2+).

This sequence belongs to the QueC family. Requires Zn(2+) as cofactor.

It carries out the reaction 7-carboxy-7-deazaguanine + NH4(+) + ATP = 7-cyano-7-deazaguanine + ADP + phosphate + H2O + H(+). It participates in purine metabolism; 7-cyano-7-deazaguanine biosynthesis. Catalyzes the ATP-dependent conversion of 7-carboxy-7-deazaguanine (CDG) to 7-cyano-7-deazaguanine (preQ(0)). This Archaeoglobus fulgidus (strain ATCC 49558 / DSM 4304 / JCM 9628 / NBRC 100126 / VC-16) protein is 7-cyano-7-deazaguanine synthase.